The primary structure comprises 194 residues: Small ribosomal subunit protein uS7 (194 aa).

The protein belongs to the universal ribosomal protein uS7 family. As to quaternary structure, part of the 30S ribosomal subunit.

One of the primary rRNA binding proteins, it binds directly to 16S rRNA where it nucleates assembly of the head domain of the 30S subunit. Is located at the subunit interface close to the decoding center. This chain is Small ribosomal subunit protein uS7, found in Methanospirillum hungatei JF-1 (strain ATCC 27890 / DSM 864 / NBRC 100397 / JF-1).